We begin with the raw amino-acid sequence, 607 residues long: Arginine--tRNA ligase, cytoplasmic (607 aa).

Ala2 bears the N-acetylalanine mark. Position 15 is a phosphoserine (Ser15). Interaction with tRNA stretches follow at residues 59–60 (EW) and 106–111 (NGPFIQ). L-arginine-binding positions include 148–153 (EFSSPN), His162, Tyr347, Asp351, and Gln375. Positions 151–162 (SPNIAKPFHAGH) match the 'HIGH' region motif. The segment at 484–498 (DTGPYLQYAHSRLRS) is interaction with tRNA.

It belongs to the class-I aminoacyl-tRNA synthetase family. In terms of assembly, monomer.

The protein resides in the cytoplasm. The protein localises to the cytosol. It carries out the reaction tRNA(Arg) + L-arginine + ATP = L-arginyl-tRNA(Arg) + AMP + diphosphate. Functionally, forms part of a macromolecular complex that catalyzes the attachment of specific amino acids to cognate tRNAs during protein synthesis. This Saccharomyces cerevisiae (strain ATCC 204508 / S288c) (Baker's yeast) protein is Arginine--tRNA ligase, cytoplasmic.